Here is a 66-residue protein sequence, read N- to C-terminus: MAFLKKSLFLVLFLGLVSLSICEEEKRETEEEENDQEEDDKSEEKRFLSLLPSLVSGAVSLVKKLG.

The first 22 residues, 1-22, serve as a signal peptide directing secretion; it reads MAFLKKSLFLVLFLGLVSLSIC. A propeptide spanning residues 23-44 is cleaved from the precursor; the sequence is EEEKRETEEEENDQEEDDKSEE. Residues 25–44 form a disordered region; sequence EKRETEEEENDQEEDDKSEE. The segment covering 30-41 has biased composition (acidic residues); it reads EEEENDQEEDDK. L65 bears the Leucine amide mark.

Expressed by the skin glands.

The protein resides in the secreted. Has antimicrobial activity. The protein is Phylloseptin-H8 of Pithecopus hypochondrialis (Orange-legged leaf frog).